Here is a 138-residue protein sequence, read N- to C-terminus: MQRITITLDEELLDVIDRRVASQGYQGRSEAIRDLLRAGMRESEALPDDAACVAVVSYLYDHSTRELPRRLNQTLHAHHDLTRSTLHVHLDAGHCLEVSVLQGESGRIGELSRQLMVERGVEHGQVQVMPAPGQAKVR.

Ni(2+) is bound by residues His-76, His-87, His-89, and Cys-95.

This sequence belongs to the transcriptional regulatory CopG/NikR family. Ni(2+) is required as a cofactor.

Its function is as follows. Transcriptional regulator. This chain is Putative nickel-responsive regulator, found in Pseudomonas putida (strain W619).